Reading from the N-terminus, the 294-residue chain is Cytidine deaminase (294 aa).

2 consecutive CMP/dCMP-type deaminase domains span residues 48–168 (DDDA…FGPT) and 187–294 (AETD…RVTF). 89–91 (NME) contributes to the substrate binding site. His102 contacts Zn(2+). Glu104 serves as the catalytic Proton donor. Zn(2+) contacts are provided by Cys129 and Cys132.

The protein belongs to the cytidine and deoxycytidylate deaminase family. As to quaternary structure, homodimer. Requires Zn(2+) as cofactor.

It catalyses the reaction cytidine + H2O + H(+) = uridine + NH4(+). The enzyme catalyses 2'-deoxycytidine + H2O + H(+) = 2'-deoxyuridine + NH4(+). In terms of biological role, this enzyme scavenges exogenous and endogenous cytidine and 2'-deoxycytidine for UMP synthesis. In Yersinia pseudotuberculosis serotype IB (strain PB1/+), this protein is Cytidine deaminase.